The primary structure comprises 92 residues: Defensin Lucifensin (92 aa).

Residues Met-1–Ala-23 form the signal peptide. The propeptide occupies Leu-24–Arg-52. Intrachain disulfides connect Cys-55/Cys-82, Cys-68/Cys-88, and Cys-72/Cys-90.

Belongs to the invertebrate defensin family. Type 1 subfamily. The disulfide bonds are essential for antimicrobial activity. In terms of tissue distribution, larval fat body, hemolymph and salivary glands (at protein level). Expressed in the salivary glands of all larval stages.

The protein resides in the secreted. It localises to the host cell membrane. Shows strong antibacterial activity against numerous Gram-positive bacteria. It selectively inhibits peptidoglycan biosynthesis through complex formation with the cell wall precursor lipid II (1:1 molar ratio) thus inhibiting cell wall synthesis. Shows antibacterial activity against the Gram-positive bacteria M.luteus, E.fecalis (MIC=32 mg/L), S.aureus (MIC=16 mg/L), S.carnosus (MIC=2 mg/L), S.pneumoniae (MIC=2 mg/L) and S.pyogenes (MIC=2 mg/L) and against a number of methicillin-resistant S.aureus and glycopeptide-intermediate S.aureus isolates. Does not show antibacterial activity against Gram-negative bacteria or antifungal activity against C.utilis. Shows slight antifungal activity against C.albicans. This chain is Defensin Lucifensin, found in Lucilia sericata (Green bottle fly).